The following is a 189-amino-acid chain: CASP-like protein 1U2 (189 aa).

Topologically, residues 1–24 (MFGSDDSGCHVMDDDVAPPANGSK) are cytoplasmic. The chain crosses the membrane as a helical span at residues 25–45 (AVTLLLRLITLALALTSAVLM). At 46-71 (ATASECTIYGLDGATATTVTFKDYQP) the chain is on the extracellular side. Residues 72-92 (FIYLVGSNIAATILEVAAIYV) form a helical membrane-spanning segment. At 93 to 109 (QVGKGDDVEDAPMIPRV) the chain is on the cytoplasmic side. A helical transmembrane segment spans residues 110–130 (VLVVVDVAVQMLLYSATGAVF). The Extracellular segment spans residues 131 to 158 (AAVMAYGPQISACTGAAGHFCEQVQRSK). A helical membrane pass occupies residues 159–179 (IISLAASLSAVLAAVAKDVAL). The Cytoplasmic portion of the chain corresponds to 180–189 (PCSVWPHPSS).

The protein belongs to the Casparian strip membrane proteins (CASP) family. Homodimer and heterodimers.

The protein localises to the cell membrane. This Sorghum bicolor (Sorghum) protein is CASP-like protein 1U2.